We begin with the raw amino-acid sequence, 147 residues long: MVHWTAEEKQLITGLWGKVNVAECGAEALARLLIVYPWTQRFFASFGNLSSPTAILGNPMVRAHGKKVLTSFGDAVKNLDNIKNTFSQLSELHCDKLHVDPENFRLLGDILIIVLAAHFSKDFTPECQAAWQKLVRVVAHALARKYH.

The Globin domain occupies 3-147 (HWTAEEKQLI…VAHALARKYH (145 aa)). 2 residues coordinate heme b: His64 and His93.

This sequence belongs to the globin family. In terms of assembly, heterotetramer of 2 alpha (or alpha-D) and 2 beta chains. Red blood cells.

Functionally, involved in oxygen transport from the lung to the various peripheral tissues. The beta chain is a component of adult hemoglobin A and D. The chain is Hemoglobin subunit beta (HBB) from Gallus gallus (Chicken).